Reading from the N-terminus, the 433-residue chain is Pyroglutamylated RF-amide peptide receptor (433 aa).

The Extracellular segment spans residues 1–46 (MQALNITAEQFSRLLSAHNLTREQFIHRYGLRPLVYTPELPARAKV). 2 N-linked (GlcNAc...) asparagine glycosylation sites follow: Asn5 and Asn19. The helical transmembrane segment at 47–67 (AFALAGALIFALALFGNSLVI) threads the bilayer. Over 68-81 (YVVTRSKAMRTVTN) the chain is Cytoplasmic. Residues 82–102 (IFICSLALSDLLIAFFCIPVT) traverse the membrane as a helical segment. Residues 103–120 (MLQNISDKWLGGAFICKM) are Extracellular-facing. A helical membrane pass occupies residues 121-141 (VPFVQSTAVVTEILTMTCIAV). The Cytoplasmic portion of the chain corresponds to 142 to 162 (ERHQGLVHPFKMKWQYTTRRA). A helical membrane pass occupies residues 163-183 (FTILGVVWLAAIIVGSPMWHV). The Extracellular portion of the chain corresponds to 184-212 (QRLEIKYDFLYEKEHICCLEEWASPVHQR). Residues 213–233 (IYSTFILVILFLLPLVVMLVL) traverse the membrane as a helical segment. The Cytoplasmic portion of the chain corresponds to 234 to 271 (YSKIGYELWIKKRVGDSSALQTIHGKEMSKIARKKKRA). The chain crosses the membrane as a helical span at residues 272–292 (VIMMVTVVALFAACWAPFHVV). The Extracellular segment spans residues 293 to 313 (HMMVEYSNFEKEYDDVTIKMV). A helical transmembrane segment spans residues 314–334 (FAVAQTIGFFNSICNPFVYAF). Topologically, residues 335–433 (MNENFKKNFL…NSTFGSGHEL (99 aa)) are cytoplasmic. The disordered stretch occupies residues 356-389 (SSPARKPGNSGISMMQKRAKLSRPQRPVEETKGD).

This sequence belongs to the G-protein coupled receptor 1 family. Highly expressed in the adrenal gland and at moderate levels in the eye and testis. Expressed widely in the brain with high levels in the hypothalamus and moderate levels in the amygdala, basal forebrain, cortex, medulla oblongata, midbrain and thalamus.

It localises to the cell membrane. Receptor for the orexigenic neuropeptide QRFP. The activity of this receptor is mediated by G proteins that modulate adenylate cyclase activity and intracellular calcium levels. This chain is Pyroglutamylated RF-amide peptide receptor (Qrfpr), found in Rattus norvegicus (Rat).